The chain runs to 141 residues: Large-conductance mechanosensitive channel (141 aa).

The next 2 helical transmembrane spans lie at 16 to 36 (VIDL…VDSL) and 83 to 103 (GAFI…FVAI).

It belongs to the MscL family. Homopentamer.

Its subcellular location is the cell inner membrane. Its function is as follows. Channel that opens in response to stretch forces in the membrane lipid bilayer. May participate in the regulation of osmotic pressure changes within the cell. The chain is Large-conductance mechanosensitive channel from Azoarcus sp. (strain BH72).